The chain runs to 263 residues: 5'-nucleotidase SurE (263 aa).

Positions 8, 9, 40, and 93 each coordinate a divalent metal cation.

Belongs to the SurE nucleotidase family. It depends on a divalent metal cation as a cofactor.

It is found in the cytoplasm. The catalysed reaction is a ribonucleoside 5'-phosphate + H2O = a ribonucleoside + phosphate. Its function is as follows. Nucleotidase that shows phosphatase activity on nucleoside 5'-monophosphates. The polypeptide is 5'-nucleotidase SurE (Beijerinckia indica subsp. indica (strain ATCC 9039 / DSM 1715 / NCIMB 8712)).